Reading from the N-terminus, the 179-residue chain is Adenine phosphoribosyltransferase (179 aa).

The protein belongs to the purine/pyrimidine phosphoribosyltransferase family. Homodimer.

It localises to the cytoplasm. It catalyses the reaction AMP + diphosphate = 5-phospho-alpha-D-ribose 1-diphosphate + adenine. The protein operates within purine metabolism; AMP biosynthesis via salvage pathway; AMP from adenine: step 1/1. In terms of biological role, catalyzes a salvage reaction resulting in the formation of AMP, that is energically less costly than de novo synthesis. The chain is Adenine phosphoribosyltransferase from Methylacidiphilum infernorum (isolate V4) (Methylokorus infernorum (strain V4)).